The sequence spans 292 residues: Protein SETSIP (292 aa).

A compositionally biased stretch (low complexity) spans 1 to 11 (MAPKRQSPLPL). Disordered stretches follow at residues 1–43 (MAPK…EQQE) and 158–292 (LNES…GEDD). Residues 35-78 (KKGEKEQQEAIEHIDEVQNEIDRLNEQDSEEILKVEQKYNKLRQ) are a coiled coil. Positions 237 to 292 (DMDDEEGGEDDDDDDDDGDEGEEELEDIDEGDEDEGEEDEDDDEGEEGEEDEGEDD) are enriched in acidic residues.

Belongs to the nucleosome assembly protein (NAP) family. In terms of tissue distribution, expressed in endothelial cell (EC) and protein-induced pluripotent stem (PiPS) endothelial cell (EC) (at protein level).

It is found in the cytoplasm. The protein localises to the nucleus. Plays a role as a transcriptional activator involved in the early stage of somatic cell reprogramming. Promotes the differentiation of protein-induced pluripotent stem (PiPS) cells into endothelial cells and the formation of vascular-like tubes (in vitro). Involved in the transcription induction of vascular endothelial-cadherin (VE-cadherin) expression. Associates to the VE-cadherin gene promoter. This chain is Protein SETSIP (SETSIP), found in Homo sapiens (Human).